The sequence spans 486 residues: Malonate-semialdehyde dehydrogenase 1 (486 aa).

5 residues coordinate NAD(+): Phe-154, Lys-178, Glu-181, Arg-182, and Ser-231. Cys-286 serves as the catalytic Nucleophile. Glu-386 serves as a coordination point for NAD(+).

Belongs to the aldehyde dehydrogenase family. IolA subfamily. In terms of assembly, homotetramer.

The catalysed reaction is 3-oxopropanoate + NAD(+) + CoA + H2O = hydrogencarbonate + acetyl-CoA + NADH + H(+). It catalyses the reaction 2-methyl-3-oxopropanoate + NAD(+) + CoA + H2O = propanoyl-CoA + hydrogencarbonate + NADH + H(+). It functions in the pathway polyol metabolism; myo-inositol degradation into acetyl-CoA; acetyl-CoA from myo-inositol: step 7/7. In terms of biological role, catalyzes the oxidation of malonate semialdehyde (MSA) and methylmalonate semialdehyde (MMSA) into acetyl-CoA and propanoyl-CoA, respectively. Is involved in a myo-inositol catabolic pathway. Bicarbonate, and not CO2, is the end-product of the enzymatic reaction. The chain is Malonate-semialdehyde dehydrogenase 1 from Oceanobacillus iheyensis (strain DSM 14371 / CIP 107618 / JCM 11309 / KCTC 3954 / HTE831).